The chain runs to 324 residues: Signal peptidase I (324 aa).

Met-1 is subject to Blocked amino end (Met). The Periplasmic portion of the chain corresponds to 1-3 (MAN). The chain crosses the membrane as a helical span at residues 4–22 (MFALILVIATLVTGILWCV). Over 23 to 58 (DKFFFAPKRRERQAAAQAAAGDSLDKATLKKVAPKP) the chain is Cytoplasmic. Residues 59–77 (GWLETGASVFPVLAIVLIV) form a helical membrane-spanning segment. The Periplasmic portion of the chain corresponds to 78–324 (RSFIYEPFQI…LRLSRIGGIH (247 aa)). Active-site residues include Ser-91 and Lys-146. A disulfide bridge links Cys-171 with Cys-177.

The protein belongs to the peptidase S26 family.

It is found in the cell inner membrane. It catalyses the reaction Cleavage of hydrophobic, N-terminal signal or leader sequences from secreted and periplasmic proteins.. In Escherichia coli (strain K12), this protein is Signal peptidase I (lepB).